Reading from the N-terminus, the 285-residue chain is Tyrosine recombinase XerA (285 aa).

The 78-residue stretch at 7–84 folds into the Core-binding (CB) domain; it reads IVNSDILEEF…ALKSYFKFEG (78 aa). Residues 100-274 enclose the Tyr recombinase domain; that stretch reads SLPKSLTEDE…TTKHLREAIE (175 aa). Catalysis depends on residues arginine 135, lysine 160, histidine 226, arginine 229, and histidine 252. The active-site O-(3'-phospho-DNA)-tyrosine intermediate is tyrosine 261.

Belongs to the 'phage' integrase family. XerA subfamily.

It is found in the cytoplasm. In terms of biological role, site-specific tyrosine recombinase, which acts by catalyzing the cutting and rejoining of the recombining DNA molecules. This is Tyrosine recombinase XerA from Pyrococcus horikoshii (strain ATCC 700860 / DSM 12428 / JCM 9974 / NBRC 100139 / OT-3).